The primary structure comprises 205 residues: Probable thymidylate kinase (205 aa).

7 to 14 (GIDGAGKS) is a binding site for ATP.

The protein belongs to the thymidylate kinase family.

It carries out the reaction dTMP + ATP = dTDP + ADP. This chain is Probable thymidylate kinase, found in Thermococcus kodakarensis (strain ATCC BAA-918 / JCM 12380 / KOD1) (Pyrococcus kodakaraensis (strain KOD1)).